Consider the following 131-residue polypeptide: Putative protein PTGES3L (131 aa).

The CS domain maps to 3-91; it reads RQPARTLWYD…KEKVAWPRLT (89 aa).

This sequence belongs to the p23/wos2 family.

In Mus musculus (Mouse), this protein is Putative protein PTGES3L (Ptges3l).